A 250-amino-acid polypeptide reads, in one-letter code: Copper homeostasis protein cutC homolog (250 aa).

The protein belongs to the CutC family.

Functionally, involved in copper homeostasis. Affects body morphology and length, egg laying and brood size. This is Copper homeostasis protein cutC homolog (cutc-1) from Caenorhabditis elegans.